Reading from the N-terminus, the 437-residue chain is Methylenetetrahydrofolate--tRNA-(uracil-5-)-methyltransferase TrmFO (437 aa).

8–13 is a binding site for FAD; that stretch reads GAGLAG.

Belongs to the MnmG family. TrmFO subfamily. Requires FAD as cofactor.

The protein localises to the cytoplasm. The catalysed reaction is uridine(54) in tRNA + (6R)-5,10-methylene-5,6,7,8-tetrahydrofolate + NADH + H(+) = 5-methyluridine(54) in tRNA + (6S)-5,6,7,8-tetrahydrofolate + NAD(+). It carries out the reaction uridine(54) in tRNA + (6R)-5,10-methylene-5,6,7,8-tetrahydrofolate + NADPH + H(+) = 5-methyluridine(54) in tRNA + (6S)-5,6,7,8-tetrahydrofolate + NADP(+). In terms of biological role, catalyzes the folate-dependent formation of 5-methyl-uridine at position 54 (M-5-U54) in all tRNAs. The chain is Methylenetetrahydrofolate--tRNA-(uracil-5-)-methyltransferase TrmFO from Desulfitobacterium hafniense (strain Y51).